The sequence spans 82 residues: Small ribosomal subunit protein bS16 (82 aa).

This sequence belongs to the bacterial ribosomal protein bS16 family.

This Clostridium botulinum (strain Okra / Type B1) protein is Small ribosomal subunit protein bS16.